The sequence spans 514 residues: Efflux pump aflT (514 aa).

10 consecutive transmembrane segments (helical) span residues 13 to 33, 61 to 81, 85 to 105, 116 to 136, 146 to 166, 174 to 194, 218 to 238, 247 to 267, 289 to 309, and 321 to 341; these read ISGMKLYLIVLSLLLAVFCVA, SAYLLTTCAFQLLYGKLYALF, WVFLVALCIFEVGSLICGVAP, IAGVGSSGIFTGALVTIAHIV, GLLGGMYGIASVAGPLLGGAF, WCFYINLPVGGVTAVVILFLL, GTIVFTPSIICVLLALQWGGV, IIALFVLFGVLLITFIIIQVL, VFVFFIGASMFVMIYYVPIWF, and GIDSIALILANTAGAIISGAV. An N-linked (GlcNAc...) asparagine glycan is attached at Asn343. Helical transmembrane passes span 351 to 371, 378 to 398, 411 to 431, and 485 to 505; these read WFIVSSVIMSIGAGCLTLFTV, WIGFLFLYGIGVGFGFQQGAV, IGTALIWFVQMLGGALFTSVA, and LDVFQVALICSCLSILGAVGI.

It belongs to the major facilitator superfamily. TCR/Tet family.

Its subcellular location is the cell membrane. In terms of biological role, efflux pump; part of the gene cluster that mediates the biosynthesis of aflatoxins. The chain is Efflux pump aflT from Aspergillus parasiticus (strain ATCC 56775 / NRRL 5862 / SRRC 143 / SU-1).